The primary structure comprises 348 residues: GTPase Obg (348 aa).

Positions 1–159 constitute an Obg domain; it reads MKFLDQARIY…MTLWLRLKLI (159 aa). In terms of domain architecture, OBG-type G spans 160 to 327; it reads ADAGLVGLPN…TLQSLLAAID (168 aa). GTP is bound by residues 166–173, 191–195, 212–215, 279–282, and 308–310; these read GLPNAGKS, FTTLH, DIPG, SKID, and SAA. Residues S173 and T193 each contribute to the Mg(2+) site.

This sequence belongs to the TRAFAC class OBG-HflX-like GTPase superfamily. OBG GTPase family. In terms of assembly, monomer. Mg(2+) is required as a cofactor.

Its subcellular location is the cytoplasm. In terms of biological role, an essential GTPase which binds GTP, GDP and possibly (p)ppGpp with moderate affinity, with high nucleotide exchange rates and a fairly low GTP hydrolysis rate. Plays a role in control of the cell cycle, stress response, ribosome biogenesis and in those bacteria that undergo differentiation, in morphogenesis control. The protein is GTPase Obg of Beijerinckia indica subsp. indica (strain ATCC 9039 / DSM 1715 / NCIMB 8712).